A 542-amino-acid chain; its full sequence is Glucans biosynthesis protein G (542 aa).

Residues 1–34 (MVSLLRCPSSKPYSSLICSLTLGAVVALSGVAYA) form the signal peptide.

It belongs to the OpgD/OpgG family.

The protein resides in the periplasm. The protein operates within glycan metabolism; osmoregulated periplasmic glucan (OPG) biosynthesis. Functionally, involved in the biosynthesis of osmoregulated periplasmic glucans (OPGs). This is Glucans biosynthesis protein G from Shewanella baltica (strain OS155 / ATCC BAA-1091).